Reading from the N-terminus, the 77-residue chain is Early E3 9.0 kDa glycoprotein (77 aa).

An N-linked (GlcNAc...) asparagine; by host glycan is attached at asparagine 7. The helical transmembrane segment at 27–47 (ITILIVIGILILSVILYFIFC) threads the bilayer.

This sequence belongs to the adenoviridae E3A-1 family.

The protein localises to the host nucleus membrane. This is Early E3 9.0 kDa glycoprotein from Human adenovirus B serotype 3 (HAdV-3).